Consider the following 990-residue polypeptide: Translation initiation factor IF-2 (990 aa).

Positions 92 to 402 (KKRTFVKRDD…QRDEHLQAAP (311 aa)) are disordered. Composition is skewed to low complexity over residues 104 to 116 (EGAADGAGSAAFA) and 131 to 151 (EAPAEQAQADAAPAADGAAPA). The span at 158–201 (ELARREEQARHQAELIRRQEAELAAKRAAREAREKREREAEERA) shows a compositional bias: basic and acidic residues. Positions 223–243 (TREQAAEATARNAAQLQARAK) are enriched in low complexity. Basic and acidic residues predominate over residues 244-264 (AAAESKARSDEEAARAADLDA). Composition is skewed to low complexity over residues 281 to 290 (ATPKKAVMVA) and 318 to 342 (PAVGATRTAAGAARAGAAAGAPGAG). 2 stretches are compositionally biased toward basic and acidic residues: residues 358–368 (PAKKKEIKTRG) and 386–398 (RRGDSRDQRDEHL). The tr-type G domain maps to 490-659 (PRAPVVTVMG…LLQADVMELK (170 aa)). The segment at 499–506 (GHVDHGKT) is G1. GTP is bound at residue 499–506 (GHVDHGKT). The interval 524 to 528 (GITQH) is G2. The tract at residues 545–548 (DTPG) is G3. GTP is bound by residues 545–549 (DTPGH) and 599–602 (TKAD). The interval 599–602 (TKAD) is G4. The G5 stretch occupies residues 635–637 (SSK).

This sequence belongs to the TRAFAC class translation factor GTPase superfamily. Classic translation factor GTPase family. IF-2 subfamily.

The protein localises to the cytoplasm. Functionally, one of the essential components for the initiation of protein synthesis. Protects formylmethionyl-tRNA from spontaneous hydrolysis and promotes its binding to the 30S ribosomal subunits. Also involved in the hydrolysis of GTP during the formation of the 70S ribosomal complex. This chain is Translation initiation factor IF-2, found in Verminephrobacter eiseniae (strain EF01-2).